A 773-amino-acid polypeptide reads, in one-letter code: ATP-dependent permease MDL2, mitochondrial (773 aa).

A mitochondrion-targeting transit peptide spans M1–S90. Polar residues predominate over residues P73–S84. The disordered stretch occupies residues P73–E95. An ABC transmembrane type-1 domain is found at L119–Q413. 3 helical membrane-spanning segments follow: residues I123–V143, F170–L192, and V257–F277. G481–S488 contributes to the ATP binding site. An ABC transporter domain is found at L493–D733. 2 stretches are compositionally biased toward basic and acidic residues: residues K706–D733 and E740–K762. The interval K706–P773 is disordered.

The protein belongs to the ABC transporter superfamily. ABCB family. Mitochondrial peptide exporter (TC 3.A.1.212) subfamily.

Its subcellular location is the mitochondrion inner membrane. The chain is ATP-dependent permease MDL2, mitochondrial (MDL2) from Saccharomyces cerevisiae (strain ATCC 204508 / S288c) (Baker's yeast).